A 251-amino-acid polypeptide reads, in one-letter code: Flap endonuclease Xni (251 aa).

Residue D104 coordinates Mg(2+). The 90-residue stretch at 160 to 249 (VLPRQLPDYW…IDGNLQQLRL (90 aa)) folds into the 5'-3' exonuclease domain. K(+)-binding residues include L171, A172, P180, V182, and I185. Residues 184–189 (GIGPKS) form an interaction with DNA region.

The protein belongs to the Xni family. It depends on Mg(2+) as a cofactor. K(+) is required as a cofactor.

Functionally, has flap endonuclease activity. During DNA replication, flap endonucleases cleave the 5'-overhanging flap structure that is generated by displacement synthesis when DNA polymerase encounters the 5'-end of a downstream Okazaki fragment. In Salmonella choleraesuis (strain SC-B67), this protein is Flap endonuclease Xni.